The chain runs to 542 residues: MPTIVSYKWTLINNLKISDNQLEELLFKLKSEVKPIDADHVEIEVNNDRPDLFFPYGIIRAAKGILGKELGEPKYDIKQSVYSFEVKEVKSRPYAVAGIVKDIKLDDESLRELIQFQEKLHITVGRKRKKVAIGIHDLDKITSTKIYYKPLPLDYKFIPLNQSKLMTIKEVIEQTPQGREYGNISIYDGLSPAIVEENGDVLSIPPIINSDKTRIDEKTRNIFIDVTGTSFEAVSSTLDILVTDLAEMGGKIELLNFISPSKFEFSPLLRRYTVSVSANYISKNLGINLSLNEIEKYLRMARFDTKVLNDVVEVTVPPYRVDILSQIDLVEEIAMTIGYDKLSPKDYTIKATGKLSAETELIRTLRDLSIGAGFSEIFTFILSNDKRLRNEYVSIVNPVTVEYNAVRNSLIPTLLNFLKYNQHAIMPVYVFEIGDVVIKDKRTDTGYKNSLRAVYGIMNSKVNYEDLQSRVHQILMSLDIEPTYKTYLDDMFIPGRGAKIIDTSKSVEIGVIGEINPVLLEELEIEFPVVISEIYLDSLVKR.

Positions 269–344 (LRRYTVSVSA…MTIGYDKLSP (76 aa)) constitute a B5 domain. 4 residues coordinate Mg(2+): Asp-322, Asp-328, Glu-331, and Glu-332.

It belongs to the phenylalanyl-tRNA synthetase beta subunit family. Type 2 subfamily. In terms of assembly, tetramer of two alpha and two beta subunits. Requires Mg(2+) as cofactor.

The protein localises to the cytoplasm. The catalysed reaction is tRNA(Phe) + L-phenylalanine + ATP = L-phenylalanyl-tRNA(Phe) + AMP + diphosphate + H(+). This Sulfolobus acidocaldarius (strain ATCC 33909 / DSM 639 / JCM 8929 / NBRC 15157 / NCIMB 11770) protein is Phenylalanine--tRNA ligase beta subunit.